Consider the following 285-residue polypeptide: MSQLKPQEVVRLGDIQMANHLPFVLFGGMNVLESKDLAFEIAETYIDICKRLDIPYVFKASFDKANRSSLHSFRGPGLEKGIEWLGDIKKHFNVPIITDVHEPYQAAPVAEVADIIQLPAFLSRQTDLVEAMAKTQAIINIKKAQFLAPHEMRHILHKCLEVGNDKLILCERGSAFGYNNLVVDMLGFDIMKEMNVPVFFDVTHALQTPGGRSDSAGGRRAQITTLARAGMATGLAGLFLESHPDPDKAKCDGPSALRLSQLEPFLAQLKELDTLVKGFKKLDTH.

Belongs to the KdsA family.

The protein resides in the cytoplasm. It catalyses the reaction D-arabinose 5-phosphate + phosphoenolpyruvate + H2O = 3-deoxy-alpha-D-manno-2-octulosonate-8-phosphate + phosphate. Its pathway is carbohydrate biosynthesis; 3-deoxy-D-manno-octulosonate biosynthesis; 3-deoxy-D-manno-octulosonate from D-ribulose 5-phosphate: step 2/3. The protein operates within bacterial outer membrane biogenesis; lipopolysaccharide biosynthesis. This chain is 2-dehydro-3-deoxyphosphooctonate aldolase, found in Acinetobacter baumannii (strain SDF).